Here is a 243-residue protein sequence, read N- to C-terminus: Venom nerve growth factor 5 (243 aa).

The first 18 residues, 1-18, serve as a signal peptide directing secretion; it reads MSMLCYTLIIAFLIGIWA. The propeptide occupies 19–125; sequence APKSEDNVPL…TLNRNIRTKR (107 aa). Basic and acidic residues predominate over residues 47 to 66; sequence GLKTSRNTDQRHPAPKKAED. The disordered stretch occupies residues 47-67; it reads GLKTSRNTDQRHPAPKKAEDQ. 3 disulfides stabilise this stretch: Cys139–Cys204, Cys182–Cys232, and Cys192–Cys234. Asn148 is a glycosylation site (N-linked (GlcNAc...) asparagine).

Belongs to the NGF-beta family. In terms of assembly, homodimer; non-covalently linked. Expressed by the venom gland.

Its subcellular location is the secreted. Nerve growth factor is important for the development and maintenance of the sympathetic and sensory nervous systems. It stimulates division and differentiation of sympathetic and embryonic sensory neurons as well as basal forebrain cholinergic neurons in the brain. Its relevance in the snake venom is not clear. However, it has been shown to inhibit metalloproteinase-dependent proteolysis of platelet glycoprotein Ib alpha, suggesting a metalloproteinase inhibition to prevent metalloprotease autodigestion and/or protection against prey proteases. Binds a lipid between the two protein chains in the homodimer. The lipid-bound form promotes histamine relase from mouse mast cells, contrary to the lipid-free form. This chain is Venom nerve growth factor 5, found in Tropidechis carinatus (Australian rough-scaled snake).